Consider the following 380-residue polypeptide: Cytochrome b (380 aa).

The next 4 membrane-spanning stretches (helical) occupy residues 34-54, 78-99, 114-134, and 179-199; these read FGSL…LLAA, WLIR…YLHI, WNTG…GYVL, and FFTL…IHLT. The heme b site is built by histidine 84 and histidine 98. Histidine 183 and histidine 197 together coordinate heme b. A ubiquinone is bound at residue histidine 202. The next 4 membrane-spanning stretches (helical) occupy residues 227 to 247, 289 to 309, 321 to 341, and 348 to 368; these read TKDI…ALFS, LGGV…PLLH, LSQL…WIGS, and FIII…ILFP.

Belongs to the cytochrome b family. As to quaternary structure, the cytochrome bc1 complex contains 11 subunits: 3 respiratory subunits (MT-CYB, CYC1 and UQCRFS1), 2 core proteins (UQCRC1 and UQCRC2) and 6 low-molecular weight proteins (UQCRH/QCR6, UQCRB/QCR7, UQCRQ/QCR8, UQCR10/QCR9, UQCR11/QCR10 and a cleavage product of UQCRFS1). This cytochrome bc1 complex then forms a dimer. Heme b is required as a cofactor.

The protein localises to the mitochondrion inner membrane. In terms of biological role, component of the ubiquinol-cytochrome c reductase complex (complex III or cytochrome b-c1 complex) that is part of the mitochondrial respiratory chain. The b-c1 complex mediates electron transfer from ubiquinol to cytochrome c. Contributes to the generation of a proton gradient across the mitochondrial membrane that is then used for ATP synthesis. The polypeptide is Cytochrome b (MT-CYB) (Eudyptes chrysolophus (Macaroni penguin)).